Consider the following 358-residue polypeptide: Phosphoserine aminotransferase (358 aa).

Arg-41 provides a ligand contact to L-glutamate. Pyridoxal 5'-phosphate is bound by residues 75–76, Trp-101, Thr-150, Asp-170, and Gln-193; that span reads AR. At Lys-194 the chain carries N6-(pyridoxal phosphate)lysine. Position 235–236 (235–236) interacts with pyridoxal 5'-phosphate; it reads NT.

It belongs to the class-V pyridoxal-phosphate-dependent aminotransferase family. SerC subfamily. As to quaternary structure, homodimer. Requires pyridoxal 5'-phosphate as cofactor.

Its subcellular location is the cytoplasm. The catalysed reaction is O-phospho-L-serine + 2-oxoglutarate = 3-phosphooxypyruvate + L-glutamate. The enzyme catalyses 4-(phosphooxy)-L-threonine + 2-oxoglutarate = (R)-3-hydroxy-2-oxo-4-phosphooxybutanoate + L-glutamate. Its pathway is amino-acid biosynthesis; L-serine biosynthesis; L-serine from 3-phospho-D-glycerate: step 2/3. It participates in cofactor biosynthesis; pyridoxine 5'-phosphate biosynthesis; pyridoxine 5'-phosphate from D-erythrose 4-phosphate: step 3/5. Functionally, catalyzes the reversible conversion of 3-phosphohydroxypyruvate to phosphoserine and of 3-hydroxy-2-oxo-4-phosphonooxybutanoate to phosphohydroxythreonine. The chain is Phosphoserine aminotransferase from Histophilus somni (strain 129Pt) (Haemophilus somnus).